The sequence spans 331 residues: Holliday junction branch migration complex subunit RuvB (331 aa).

A large ATPase domain (RuvB-L) region spans residues 1-182 (MSSDTLHKYE…FGIPLHLEFY (182 aa)). ATP-binding positions include Leu21, Arg22, Gly63, Lys66, Thr67, Thr68, 129–131 (EDY), Arg172, Tyr182, and Arg219. Thr67 is a Mg(2+) binding site. The segment at 183–254 (SVDELVLVIK…FANSALFRLG (72 aa)) is small ATPAse domain (RuvB-S). The segment at 257 to 331 (GAGFDKMDLK…FEYLLSSKYI (75 aa)) is head domain (RuvB-H). Residues Arg310 and Arg315 each coordinate DNA.

It belongs to the RuvB family. Homohexamer. Forms an RuvA(8)-RuvB(12)-Holliday junction (HJ) complex. HJ DNA is sandwiched between 2 RuvA tetramers; dsDNA enters through RuvA and exits via RuvB. An RuvB hexamer assembles on each DNA strand where it exits the tetramer. Each RuvB hexamer is contacted by two RuvA subunits (via domain III) on 2 adjacent RuvB subunits; this complex drives branch migration. In the full resolvosome a probable DNA-RuvA(4)-RuvB(12)-RuvC(2) complex forms which resolves the HJ.

The protein resides in the cytoplasm. It catalyses the reaction ATP + H2O = ADP + phosphate + H(+). Functionally, the RuvA-RuvB-RuvC complex processes Holliday junction (HJ) DNA during genetic recombination and DNA repair, while the RuvA-RuvB complex plays an important role in the rescue of blocked DNA replication forks via replication fork reversal (RFR). RuvA specifically binds to HJ cruciform DNA, conferring on it an open structure. The RuvB hexamer acts as an ATP-dependent pump, pulling dsDNA into and through the RuvAB complex. RuvB forms 2 homohexamers on either side of HJ DNA bound by 1 or 2 RuvA tetramers; 4 subunits per hexamer contact DNA at a time. Coordinated motions by a converter formed by DNA-disengaged RuvB subunits stimulates ATP hydrolysis and nucleotide exchange. Immobilization of the converter enables RuvB to convert the ATP-contained energy into a lever motion, pulling 2 nucleotides of DNA out of the RuvA tetramer per ATP hydrolyzed, thus driving DNA branch migration. The RuvB motors rotate together with the DNA substrate, which together with the progressing nucleotide cycle form the mechanistic basis for DNA recombination by continuous HJ branch migration. Branch migration allows RuvC to scan DNA until it finds its consensus sequence, where it cleaves and resolves cruciform DNA. This chain is Holliday junction branch migration complex subunit RuvB, found in Anaplasma marginale (strain St. Maries).